The sequence spans 437 residues: Ribosomal protein uS12 methylthiotransferase RimO (437 aa).

The 111-residue stretch at 4–114 (PRVSFVSLGC…VMNAVHEVAP (111 aa)) folds into the MTTase N-terminal domain. The [4Fe-4S] cluster site is built by cysteine 13, cysteine 49, cysteine 78, cysteine 145, cysteine 149, and cysteine 152. In terms of domain architecture, Radical SAM core spans 131–369 (LTPRHYAYLK…MAKQQQISTN (239 aa)). Residues 372-437 (KKKVGKRLPV…DAYDLHGTAV (66 aa)) enclose the TRAM domain.

The protein belongs to the methylthiotransferase family. RimO subfamily. [4Fe-4S] cluster is required as a cofactor.

The protein resides in the cytoplasm. It carries out the reaction L-aspartate(89)-[ribosomal protein uS12]-hydrogen + (sulfur carrier)-SH + AH2 + 2 S-adenosyl-L-methionine = 3-methylsulfanyl-L-aspartate(89)-[ribosomal protein uS12]-hydrogen + (sulfur carrier)-H + 5'-deoxyadenosine + L-methionine + A + S-adenosyl-L-homocysteine + 2 H(+). Its function is as follows. Catalyzes the methylthiolation of an aspartic acid residue of ribosomal protein uS12. The chain is Ribosomal protein uS12 methylthiotransferase RimO from Brucella abortus (strain S19).